A 219-amino-acid chain; its full sequence is PKHD-type hydroxylase AM1_3707 (219 aa).

In terms of domain architecture, Fe2OG dioxygenase spans 78–172 (SIHTLLFSRY…RLVAVGWVQS (95 aa)). Residues His96, Asp98, and His153 each coordinate Fe cation. Arg163 serves as a coordination point for 2-oxoglutarate.

It depends on Fe(2+) as a cofactor. Requires L-ascorbate as cofactor.

The polypeptide is PKHD-type hydroxylase AM1_3707 (Acaryochloris marina (strain MBIC 11017)).